Reading from the N-terminus, the 482-residue chain is tRNA sulfurtransferase (482 aa).

The region spanning 61–165 (AEVLEILTHT…NDRLNQVLAS (105 aa)) is the THUMP domain. ATP is bound by residues 183–184 (LI), lysine 265, glycine 287, and glutamine 296. An intrachain disulfide couples cysteine 344 to cysteine 456. The 79-residue stretch at 404–482 (VEEHAIVLDI…GFNNVKVYRP (79 aa)) folds into the Rhodanese domain. The Cysteine persulfide intermediate role is filled by cysteine 456.

Belongs to the ThiI family.

Its subcellular location is the cytoplasm. The enzyme catalyses [ThiI sulfur-carrier protein]-S-sulfanyl-L-cysteine + a uridine in tRNA + 2 reduced [2Fe-2S]-[ferredoxin] + ATP + H(+) = [ThiI sulfur-carrier protein]-L-cysteine + a 4-thiouridine in tRNA + 2 oxidized [2Fe-2S]-[ferredoxin] + AMP + diphosphate. It carries out the reaction [ThiS sulfur-carrier protein]-C-terminal Gly-Gly-AMP + S-sulfanyl-L-cysteinyl-[cysteine desulfurase] + AH2 = [ThiS sulfur-carrier protein]-C-terminal-Gly-aminoethanethioate + L-cysteinyl-[cysteine desulfurase] + A + AMP + 2 H(+). It functions in the pathway cofactor biosynthesis; thiamine diphosphate biosynthesis. Functionally, catalyzes the ATP-dependent transfer of a sulfur to tRNA to produce 4-thiouridine in position 8 of tRNAs, which functions as a near-UV photosensor. Also catalyzes the transfer of sulfur to the sulfur carrier protein ThiS, forming ThiS-thiocarboxylate. This is a step in the synthesis of thiazole, in the thiamine biosynthesis pathway. The sulfur is donated as persulfide by IscS. This Vibrio campbellii (strain ATCC BAA-1116) protein is tRNA sulfurtransferase.